The chain runs to 419 residues: Gamma-glutamyl phosphate reductase (419 aa).

It belongs to the gamma-glutamyl phosphate reductase family.

The protein resides in the cytoplasm. The enzyme catalyses L-glutamate 5-semialdehyde + phosphate + NADP(+) = L-glutamyl 5-phosphate + NADPH + H(+). It functions in the pathway amino-acid biosynthesis; L-proline biosynthesis; L-glutamate 5-semialdehyde from L-glutamate: step 2/2. Functionally, catalyzes the NADPH-dependent reduction of L-glutamate 5-phosphate into L-glutamate 5-semialdehyde and phosphate. The product spontaneously undergoes cyclization to form 1-pyrroline-5-carboxylate. The sequence is that of Gamma-glutamyl phosphate reductase from Mannheimia succiniciproducens (strain KCTC 0769BP / MBEL55E).